We begin with the raw amino-acid sequence, 121 residues long: Large ribosomal subunit protein bL20 (121 aa).

The protein belongs to the bacterial ribosomal protein bL20 family.

Binds directly to 23S ribosomal RNA and is necessary for the in vitro assembly process of the 50S ribosomal subunit. It is not involved in the protein synthesizing functions of that subunit. In Polynucleobacter asymbioticus (strain DSM 18221 / CIP 109841 / QLW-P1DMWA-1) (Polynucleobacter necessarius subsp. asymbioticus), this protein is Large ribosomal subunit protein bL20.